We begin with the raw amino-acid sequence, 352 residues long: Holliday junction branch migration complex subunit RuvB (352 aa).

Residues 4–191 (TDKFSAPDRV…FGIVARLEFY (188 aa)) form a large ATPase domain (RuvB-L) region. ATP contacts are provided by residues Leu-30, Arg-31, Gly-72, Lys-75, Thr-76, Thr-77, 138–140 (EDY), Arg-181, Tyr-191, and Arg-228. Thr-76 is a Mg(2+) binding site. The interval 192 to 262 (TAEELARIVT…IADAALAMLD (71 aa)) is small ATPAse domain (RuvB-S). The head domain (RuvB-H) stretch occupies residues 265 to 352 (RVGFDLMDRK…GDSGDLIDGE (88 aa)). DNA-binding residues include Arg-301, Arg-320, and Arg-325.

This sequence belongs to the RuvB family. Homohexamer. Forms an RuvA(8)-RuvB(12)-Holliday junction (HJ) complex. HJ DNA is sandwiched between 2 RuvA tetramers; dsDNA enters through RuvA and exits via RuvB. An RuvB hexamer assembles on each DNA strand where it exits the tetramer. Each RuvB hexamer is contacted by two RuvA subunits (via domain III) on 2 adjacent RuvB subunits; this complex drives branch migration. In the full resolvosome a probable DNA-RuvA(4)-RuvB(12)-RuvC(2) complex forms which resolves the HJ.

It is found in the cytoplasm. It catalyses the reaction ATP + H2O = ADP + phosphate + H(+). Functionally, the RuvA-RuvB-RuvC complex processes Holliday junction (HJ) DNA during genetic recombination and DNA repair, while the RuvA-RuvB complex plays an important role in the rescue of blocked DNA replication forks via replication fork reversal (RFR). RuvA specifically binds to HJ cruciform DNA, conferring on it an open structure. The RuvB hexamer acts as an ATP-dependent pump, pulling dsDNA into and through the RuvAB complex. RuvB forms 2 homohexamers on either side of HJ DNA bound by 1 or 2 RuvA tetramers; 4 subunits per hexamer contact DNA at a time. Coordinated motions by a converter formed by DNA-disengaged RuvB subunits stimulates ATP hydrolysis and nucleotide exchange. Immobilization of the converter enables RuvB to convert the ATP-contained energy into a lever motion, pulling 2 nucleotides of DNA out of the RuvA tetramer per ATP hydrolyzed, thus driving DNA branch migration. The RuvB motors rotate together with the DNA substrate, which together with the progressing nucleotide cycle form the mechanistic basis for DNA recombination by continuous HJ branch migration. Branch migration allows RuvC to scan DNA until it finds its consensus sequence, where it cleaves and resolves cruciform DNA. The polypeptide is Holliday junction branch migration complex subunit RuvB (Cupriavidus pinatubonensis (strain JMP 134 / LMG 1197) (Cupriavidus necator (strain JMP 134))).